The primary structure comprises 97 residues: UPF0235 protein APP7_1431 (97 aa).

The protein belongs to the UPF0235 family.

This chain is UPF0235 protein APP7_1431, found in Actinobacillus pleuropneumoniae serotype 7 (strain AP76).